The following is a 442-amino-acid chain: N-acetyl-S-alkylcysteine sulfoxide monooxygenase (442 aa).

The FMN site is built by Asp-58, Thr-95, His-145, Tyr-149, Ser-219, and Ser-220.

This sequence belongs to the NtaA/SnaA/DszA monooxygenase family. Homodimer.

The enzyme catalyses (R)-N-acetyl-S-benzyl-L-cysteine sulfoxide + FMNH2 + O2 = N-acetyl-S-hydroxy-L-cysteine + benzaldehyde + FMN + H2O + H(+). It functions in the pathway amino-acid metabolism. In terms of biological role, involved in a cysteine salvage pathway from S-alkylcysteine. Catalyzes the C-S bond cleavage in N-acetyl-S-benzyl-L-cysteine sulfoxide leading to N-acetyl-S-hydroxy-L-cysteine and benzaldehyde. This pathway is likely important in the catabolism of alkylated cysteine generated by proteolysis of alkylated glutathione formed in the detoxification of a wide range of electrophiles. Has much less efficient activity with N-acetyl-S-methyl-L-cysteine sulfoxide as substrate. Cannot use S-alkylated L-cysteine sulfones and ketone analogs as substrates, demonstrating that the sulfoxide is required for activity. This Bacillus subtilis (strain 168) protein is N-acetyl-S-alkylcysteine sulfoxide monooxygenase.